The primary structure comprises 271 residues: Interleukin-1 alpha (271 aa).

Positions 1–112 (MAKVPDMFED…DSEEEIIKPR (112 aa)) are excised as a propeptide. Residue K82 is modified to N6-acetyllysine. Residues 82-86 (KKRRL) are nuclear localization signal (NLS). Phosphoserine is present on S87. 5 N-linked (GlcNAc...) asparagine glycosylation sites follow: N102, N121, N137, N141, and N211.

Belongs to the IL-1 family. Monomer. Interacts with TMED10; the interaction mediates the translocation from the cytoplasm into the ERGIC (endoplasmic reticulum-Golgi intermediate compartment) and thereby secretion. Interacts with IL1R1. Interacts with S100A13; this interaction is the first step in the export of IL1A, followed by direct translocation of this complex across the plasma membrane. In terms of processing, acetylated within its nuclear localization sequence, which impacts subcellular localization. Post-translationally, proteolytic processed by CAPN1 in a calcium-dependent manner. Cleavage from 31 kDa precursor to 18 kDa biologically active molecules. Phosphorylated. Phosphorylation greatly enhances susceptibility to digestion and promotes the conversion of pre-IL1A alpha to the biologically active IL1A.

It localises to the nucleus. The protein localises to the cytoplasm. It is found in the secreted. Its function is as follows. Cytokine constitutively present intracellularly in nearly all resting non-hematopoietic cells that plays an important role in inflammation and bridges the innate and adaptive immune systems. After binding to its receptor IL1R1 together with its accessory protein IL1RAP, forms the high affinity interleukin-1 receptor complex. Signaling involves the recruitment of adapter molecules such as MYD88, IRAK1 or IRAK4. In turn, mediates the activation of NF-kappa-B and the three MAPK pathways p38, p42/p44 and JNK pathways. Within the cell, acts as an alarmin and cell death results in its liberation in the extracellular space after disruption of the cell membrane to induce inflammation and alert the host to injury or damage. In addition to its role as a danger signal, which occurs when the cytokine is passively released by cell necrosis, directly senses DNA damage and acts as signal for genotoxic stress without loss of cell integrity. The sequence is that of Interleukin-1 alpha (IL1A) from Macaca mulatta (Rhesus macaque).